A 504-amino-acid polypeptide reads, in one-letter code: Cytochrome P450 6a9 (504 aa).

A heme-binding site is contributed by cysteine 449.

Belongs to the cytochrome P450 family. The cofactor is heme.

It localises to the endoplasmic reticulum membrane. The protein resides in the microsome membrane. In terms of biological role, involved in the metabolism of insect hormones and in the breakdown of synthetic insecticides. The chain is Cytochrome P450 6a9 (Cyp6a9) from Drosophila melanogaster (Fruit fly).